Reading from the N-terminus, the 395-residue chain is S-adenosylmethionine synthase (395 aa).

Residue histidine 16 participates in ATP binding. Aspartate 18 serves as a coordination point for Mg(2+). Glutamate 44 contacts K(+). The L-methionine site is built by glutamate 57 and glutamine 100. Positions 100-110 (QSPDIAQGVDR) are flexible loop. Residues 167–169 (DAK), 233–234 (RF), aspartate 242, 248–249 (RK), alanine 265, and lysine 269 contribute to the ATP site. Aspartate 242 provides a ligand contact to L-methionine. Position 273 (lysine 273) interacts with L-methionine.

Belongs to the AdoMet synthase family. As to quaternary structure, homotetramer; dimer of dimers. It depends on Mg(2+) as a cofactor. K(+) is required as a cofactor.

It is found in the cytoplasm. It carries out the reaction L-methionine + ATP + H2O = S-adenosyl-L-methionine + phosphate + diphosphate. The protein operates within amino-acid biosynthesis; S-adenosyl-L-methionine biosynthesis; S-adenosyl-L-methionine from L-methionine: step 1/1. Its function is as follows. Catalyzes the formation of S-adenosylmethionine (AdoMet) from methionine and ATP. The overall synthetic reaction is composed of two sequential steps, AdoMet formation and the subsequent tripolyphosphate hydrolysis which occurs prior to release of AdoMet from the enzyme. The sequence is that of S-adenosylmethionine synthase from Burkholderia thailandensis (strain ATCC 700388 / DSM 13276 / CCUG 48851 / CIP 106301 / E264).